The following is a 1009-amino-acid chain: DENN domain-containing protein 1A (1009 aa).

A uDENN domain is found at 13–145; that stretch reads FEVYVEVAYP…HKLPIPDPGV (133 aa). A cDENN domain is found at 162–298; sequence ELPSIPENRN…VISSLKNRLK (137 aa). The 79-residue stretch at 300–378 folds into the dDENN domain; it reads VSTTTGDGVA…DGRLDLLNSG (79 aa). The short motif at 381–385 is the FXDXF motif element; that stretch reads FSDVF. The tract at residues 453 to 564 is disordered; it reads DIAENGCAPT…TGPVPAPPDR (112 aa). A Phosphoserine modification is found at Ser-473. Basic and acidic residues predominate over residues 477-489; the sequence is EAKDPKLREDRRP. Residues 500 to 509 show a composition bias toward basic residues; it reads PRPHVVKRPK. Thr-519 is subject to Phosphothreonine. Phosphoserine is present on residues Ser-520, Ser-523, Ser-536, Ser-538, and Ser-546. A Clathrin box motif is present at residues 569–578; sequence DLLEDVFSNL. Phosphoserine is present on Ser-592. The disordered stretch occupies residues 648–714; the sequence is IPSKPPAASP…RKTPELGIVP (67 aa). Ser-749 is subject to Phosphoserine. Disordered regions lie at residues 796 to 831 and 928 to 1009; these read STLP…QPPL and RSSA…ETFE. Pro residues-rich tracts occupy residues 820 to 831 and 945 to 957; these read AGTPTPFPQPPL and GDPP…PPQG. The segment covering 972 to 983 has biased composition (basic and acidic residues); the sequence is DPFEDLLQKTKQ. Over residues 986–997 the composition is skewed to low complexity; it reads SPSPALAPAPDS. Over residues 999–1009 the composition is skewed to basic and acidic residues; the sequence is EQLRKQWETFE.

In terms of assembly, interacts with RAB35. Interacts with clathrin and with the adapter protein complex 2, AP-2. Interacts with ITSN1 and SH3GL2. Interacts (when phosphorylated) with YWHAE. In terms of processing, phosphorylated on serine and/or threonine in an Akt-dependent manner. Phosphorylation probably regulates the guanine nucleotide exchange factor (GEF) activity, possibly by disrupting an intramolecular interaction between the DENN domain and the C-terminus of the protein, thereby relieving the autoinhibition.

Its subcellular location is the cytoplasmic vesicle. It is found in the clathrin-coated vesicle membrane. The protein localises to the presynaptic cell membrane. The guanine nucleotide exchange factor (GEF) activity is autoinhibited. Autoinhibition may be the result of intramolecular interaction between the DENN domain and the C-terminus, which is disrupted upon phosphorylation. Activation is regulated by Akt activation. In terms of biological role, guanine nucleotide exchange factor (GEF) regulating clathrin-mediated endocytosis through RAB35 activation. Promotes the exchange of GDP to GTP, converting inactive GDP-bound RAB35 into its active GTP-bound form. Regulates clathrin-mediated endocytosis of synaptic vesicles and mediates exit from early endosomes. Binds phosphatidylinositol-phosphates (PtdInsPs), with some preference for PtdIns(3)P. This is DENN domain-containing protein 1A from Homo sapiens (Human).